The sequence spans 482 residues: Anthocyanin 3'-O-beta-glucosyltransferase (482 aa).

The Proton acceptor role is filled by histidine 16. Residue histidine 16 coordinates an anthocyanidin. Catalysis depends on aspartate 119, which acts as the Charge relay. UDP-alpha-D-glucose is bound by residues alanine 349, glutamine 351, histidine 366, tryptophan 369, asparagine 370, serine 371, and glutamate 374. Alanine 389 contacts an anthocyanidin. UDP-alpha-D-glucose contacts are provided by glutamate 390 and glutamine 391.

It belongs to the UDP-glycosyltransferase family. Post-translationally, the N-terminus is blocked. Abundant in petals and barely detected in leaves.

The catalysed reaction is delphinidin 3,5-bis-O-beta-D-glucoside + UDP-alpha-D-glucose = delphinidin 3,3',5-tri-O-beta-D-glucoside + UDP + H(+). In terms of biological role, specifically glucosylates the 3'-hydroxy group of delphinidin 3,5-di-O-glucoside to produce gentiodelphin. Shows a strict specificity for UDP-glucose as donor. In Gentiana triflora (Clustered gentian), this protein is Anthocyanin 3'-O-beta-glucosyltransferase.